The chain runs to 158 residues: Endoribonuclease YbeY (158 aa).

H119, H123, and H129 together coordinate Zn(2+).

This sequence belongs to the endoribonuclease YbeY family. It depends on Zn(2+) as a cofactor.

The protein resides in the cytoplasm. Single strand-specific metallo-endoribonuclease involved in late-stage 70S ribosome quality control and in maturation of the 3' terminus of the 16S rRNA. The polypeptide is Endoribonuclease YbeY (Shewanella sediminis (strain HAW-EB3)).